The sequence spans 160 residues: Eosinophil cationic protein (160 aa).

An N-terminal signal peptide occupies residues 1-27 (MVPKLFTPQICLLLLLGLMGVEGSLHA). Residues 28 to 72 (RPPQFTKAQWFAIQHINVNPPRCTIAMRVINNYQRRCKNQNTFLR) form a required for nearly all of the bactericidal activities; partially involved in LPS-binding region. His-42 (proton acceptor) is an active-site residue. Intrachain disulfides connect Cys-50/Cys-110, Cys-64/Cys-123, Cys-82/Cys-138, and Cys-89/Cys-98. The residue at position 60 (Tyr-60) is a 3'-nitrotyrosine. 65-69 (KNQNT) is a binding site for substrate. Residues Asn-84, Asn-92, and Asn-119 are each glycosylated (N-linked (GlcNAc...) asparagine). The Proton donor role is filled by His-155.

This sequence belongs to the pancreatic ribonuclease family. Interacts with bacterial lipopolysaccharide (LPS) and lipoteichoic acid (LTA). In vitro interacts with phospholipid bilayers.

Its subcellular location is the secreted. Its function is as follows. Cytotoxin and helminthotoxin with low-efficiency ribonuclease activity. Possesses a wide variety of biological activities. Exhibits antibacterial activity. The sequence is that of Eosinophil cationic protein (RNASE3) from Macaca nemestrina (Pig-tailed macaque).